Here is a 726-residue protein sequence, read N- to C-terminus: Catalase-peroxidase (726 aa).

Residues 1 to 33 (MSTSDDIHNTTATGKCPFHQGGHDQSAGAGTTT) are disordered. The tryptophyl-tyrosyl-methioninium (Trp-Tyr) (with M-252) cross-link spans 105–226 (WHGAGTYRSI…LGATEMGLIY (122 aa)). His106 functions as the Proton acceptor in the catalytic mechanism. Positions 226 to 252 (YVNPEGPDHSGEPLSAAAAIRATFGNM) form a cross-link, tryptophyl-tyrosyl-methioninium (Tyr-Met) (with W-105). His267 contacts heme b.

It belongs to the peroxidase family. Peroxidase/catalase subfamily. Homodimer or homotetramer. It depends on heme b as a cofactor. Post-translationally, formation of the three residue Trp-Tyr-Met cross-link is important for the catalase, but not the peroxidase activity of the enzyme.

The enzyme catalyses H2O2 + AH2 = A + 2 H2O. The catalysed reaction is 2 H2O2 = O2 + 2 H2O. In terms of biological role, bifunctional enzyme with both catalase and broad-spectrum peroxidase activity. The chain is Catalase-peroxidase from Shigella boydii serotype 4 (strain Sb227).